Consider the following 32-residue polypeptide: Fibrinolytic enzyme 2 (32 aa).

The Peptidase S8 domain maps to Ile1 to Arg32. Residue Ser5 is the Charge relay system of the active site.

Belongs to the peptidase S8 family.

With respect to regulation, inhibited by PMSF. Not inhibited by benzamidine, aprotinin, SBTI, EDTA, EGTA, 2-mercaptoethanol, iodoacetic acid or pepstatin A. Functionally, serine protease. Has fibrinolytic and fibrinogenolytic but no plasminogenolytic activity. Cleaves after Arg and Lys residues. Cleaves fibrinogen alpha chain, beta chain and gamma chain in that order. In Hediste japonica (Polychaete worm), this protein is Fibrinolytic enzyme 2.